The following is a 202-amino-acid chain: Dephospho-CoA kinase (202 aa).

One can recognise a DPCK domain in the interval 4–202 (VIGLTGGIAT…TDKGFINKER (199 aa)). ATP is bound at residue 12–17 (ATGKST).

It belongs to the CoaE family.

The protein resides in the cytoplasm. It catalyses the reaction 3'-dephospho-CoA + ATP = ADP + CoA + H(+). It functions in the pathway cofactor biosynthesis; coenzyme A biosynthesis; CoA from (R)-pantothenate: step 5/5. Its function is as follows. Catalyzes the phosphorylation of the 3'-hydroxyl group of dephosphocoenzyme A to form coenzyme A. This chain is Dephospho-CoA kinase, found in Staphylococcus haemolyticus (strain JCSC1435).